The following is a 485-amino-acid chain: Maturase K (485 aa).

This sequence belongs to the intron maturase 2 family. MatK subfamily.

The protein localises to the plastid. The protein resides in the chloroplast. Its function is as follows. Usually encoded in the trnK tRNA gene intron. Probably assists in splicing its own and other chloroplast group II introns. The polypeptide is Maturase K (Malus domestica (Apple)).